Reading from the N-terminus, the 949-residue chain is Phosphocholine transferase AnkX (949 aa).

The region spanning 155–289 is the Fido domain; sequence LNPEQIPDLA…IFNTVEIIEQ (135 aa). 10 ANK repeats span residues 391–420, 424–453, 464–494, 498–527, 554–583, 588–617, 658–687, 691–720, 725–767, and 771–800; these read VGKT…DLSL, DGKT…SQED, HGKT…QINE, SGSS…DISD, LNKE…DIDI, DKAT…NTRL, NGNP…RVDF, LGNN…TLLH, ERRN…DLNK, and KGKT…HTNI.

The protein localises to the secreted. It is found in the host cytoplasm. It catalyses the reaction [Rab1 protein]-L-serine + CDP-choline = [Rab1 protein]-O-phosphocholine-L-serine + CMP + H(+). Functionally, virulence effector that plays a role in hijacking the host vesicular trafficking by recruiting the small guanosine triphosphatase (GTPase) Rab1 to the cytosolic face of the Legionella-containing vacuole (LCVs). Acts as a phosphocholine transferase by mediating the addition of phosphocholine to Ser residues of host RAB1 (RAB1A, RAB1B or RAB1C) and RAB35, leading to displacement of GDP dissociation inhibitors (GDI). Phosphocholination of target proteins also impairs accessibility to GTPase effector LepB. Can act on both GDP-bound and GTP-bound Rab proteins. The sequence is that of Phosphocholine transferase AnkX (ankX) from Legionella pneumophila subsp. pneumophila (strain Philadelphia 1 / ATCC 33152 / DSM 7513).